A 780-amino-acid polypeptide reads, in one-letter code: Phosphoenolpyruvate synthase (780 aa).

Histidine 409 (tele-phosphohistidine intermediate) is an active-site residue. Residues arginine 499, arginine 566, glutamate 668, glycine 689, serine 690, asparagine 691, and aspartate 692 each coordinate substrate. Glutamate 668 serves as a coordination point for Mg(2+). Aspartate 692 serves as a coordination point for Mg(2+).

The protein belongs to the PEP-utilizing enzyme family. Requires Mg(2+) as cofactor.

It catalyses the reaction pyruvate + ATP + H2O = phosphoenolpyruvate + AMP + phosphate + 2 H(+). Its pathway is carbohydrate biosynthesis; gluconeogenesis. In terms of biological role, catalyzes the phosphorylation of pyruvate to phosphoenolpyruvate. The sequence is that of Phosphoenolpyruvate synthase (ppsA) from Deinococcus radiodurans (strain ATCC 13939 / DSM 20539 / JCM 16871 / CCUG 27074 / LMG 4051 / NBRC 15346 / NCIMB 9279 / VKM B-1422 / R1).